Reading from the N-terminus, the 631-residue chain is Eukaryotic translation initiation factor 3 subunit L (631 aa).

One can recognise a PCI domain in the interval 335–526; the sequence is TFVSVLIFFI…AETTLLDGER (192 aa). Positions 571–631 are disordered; sequence KSAPLPVRKP…PKSRQARIAA (61 aa). Residues 580-612 show a composition bias toward low complexity; the sequence is PASSSAPAPATTAAPISKSGESAAPAPAEAPAA.

This sequence belongs to the eIF-3 subunit L family. In terms of assembly, component of the eukaryotic translation initiation factor 3 (eIF-3) complex.

It localises to the cytoplasm. Component of the eukaryotic translation initiation factor 3 (eIF-3) complex, which is involved in protein synthesis of a specialized repertoire of mRNAs and, together with other initiation factors, stimulates binding of mRNA and methionyl-tRNAi to the 40S ribosome. The eIF-3 complex specifically targets and initiates translation of a subset of mRNAs involved in cell proliferation. The sequence is that of Eukaryotic translation initiation factor 3 subunit L from Cryptococcus neoformans var. neoformans serotype D (strain B-3501A) (Filobasidiella neoformans).